A 205-amino-acid chain; its full sequence is Large ribosomal subunit protein uL4 (205 aa).

The segment at 47–70 is disordered; sequence TRAQKSRAEVSGGGKKPFRQKGTG.

This sequence belongs to the universal ribosomal protein uL4 family. As to quaternary structure, part of the 50S ribosomal subunit.

In terms of biological role, one of the primary rRNA binding proteins, this protein initially binds near the 5'-end of the 23S rRNA. It is important during the early stages of 50S assembly. It makes multiple contacts with different domains of the 23S rRNA in the assembled 50S subunit and ribosome. Forms part of the polypeptide exit tunnel. In Acinetobacter baylyi (strain ATCC 33305 / BD413 / ADP1), this protein is Large ribosomal subunit protein uL4.